The chain runs to 187 residues: Small ribosomal subunit protein uS5 (187 aa).

The S5 DRBM domain occupies 20–83 (FADRLVAINR…EQAKRQMIRV (64 aa)). Residues 155–187 (KKEQSPRSVAQRRGKKVADILPKRDEAPAEAEA) are disordered. Positions 170-181 (KVADILPKRDEA) are enriched in basic and acidic residues.

It belongs to the universal ribosomal protein uS5 family. As to quaternary structure, part of the 30S ribosomal subunit. Contacts proteins S4 and S8.

Its function is as follows. With S4 and S12 plays an important role in translational accuracy. Located at the back of the 30S subunit body where it stabilizes the conformation of the head with respect to the body. The chain is Small ribosomal subunit protein uS5 from Ruegeria sp. (strain TM1040) (Silicibacter sp.).